A 331-amino-acid polypeptide reads, in one-letter code: Aspartate carbamoyltransferase catalytic subunit (331 aa).

Arginine 76 and threonine 77 together coordinate carbamoyl phosphate. Lysine 104 lines the L-aspartate pocket. Carbamoyl phosphate-binding residues include arginine 126, histidine 154, and glutamine 157. Residues arginine 187 and arginine 246 each coordinate L-aspartate. Residues glycine 287 and proline 288 each coordinate carbamoyl phosphate.

Belongs to the aspartate/ornithine carbamoyltransferase superfamily. ATCase family. As to quaternary structure, heterododecamer (2C3:3R2) of six catalytic PyrB chains organized as two trimers (C3), and six regulatory PyrI chains organized as three dimers (R2).

The catalysed reaction is carbamoyl phosphate + L-aspartate = N-carbamoyl-L-aspartate + phosphate + H(+). It participates in pyrimidine metabolism; UMP biosynthesis via de novo pathway; (S)-dihydroorotate from bicarbonate: step 2/3. Catalyzes the condensation of carbamoyl phosphate and aspartate to form carbamoyl aspartate and inorganic phosphate, the committed step in the de novo pyrimidine nucleotide biosynthesis pathway. The polypeptide is Aspartate carbamoyltransferase catalytic subunit (Dehalococcoides mccartyi (strain ATCC BAA-2100 / JCM 16839 / KCTC 5957 / BAV1)).